Here is a 237-residue protein sequence, read N- to C-terminus: Probable S-methyl-5'-thioinosine phosphorylase (237 aa).

Residues Thr12 and 54–55 (RH) contribute to the phosphate site. Met187 provides a ligand contact to substrate. Position 188 (Thr188) interacts with phosphate. 211–213 (NWA) contributes to the substrate binding site.

The protein belongs to the PNP/MTAP phosphorylase family. MTAP subfamily. In terms of assembly, homotrimer.

The enzyme catalyses S-methyl-5'-thioinosine + phosphate = 5-(methylsulfanyl)-alpha-D-ribose 1-phosphate + hypoxanthine. The protein operates within purine metabolism; purine nucleoside salvage. Catalyzes the reversible phosphorylation of S-methyl-5'-thioinosine (MTI) to hypoxanthine and 5-methylthioribose-1-phosphate. Involved in the breakdown of S-methyl-5'-thioadenosine (MTA), a major by-product of polyamine biosynthesis. Catabolism of (MTA) occurs via deamination to MTI and phosphorolysis to hypoxanthine. The chain is Probable S-methyl-5'-thioinosine phosphorylase from Xylella fastidiosa (strain 9a5c).